A 130-amino-acid polypeptide reads, in one-letter code: Large ribosomal subunit protein bL20 (130 aa).

This sequence belongs to the bacterial ribosomal protein bL20 family.

Its function is as follows. Binds directly to 23S ribosomal RNA and is necessary for the in vitro assembly process of the 50S ribosomal subunit. It is not involved in the protein synthesizing functions of that subunit. This chain is Large ribosomal subunit protein bL20, found in Leifsonia xyli subsp. xyli (strain CTCB07).